Here is a 78-residue protein sequence, read N- to C-terminus: Conotoxin 1 (78 aa).

Residues 1-22 (MKLTCMMFVAVLFLTASVFITA) form the signal peptide. Residues 23–51 (DDSRNGIENLPRMRRHEMKNPKASKLNKR) constitute a propeptide that is removed on maturation. Position 52 is a pyrrolidone carboxylic acid (Gln-52). 3 disulfide bridges follow: Cys-53-Cys-69, Cys-60-Cys-73, and Cys-68-Cys-77.

Belongs to the conotoxin O1 superfamily. Expressed by the venom duct.

The protein localises to the secreted. This chain is Conotoxin 1, found in Conus imperialis (Imperial cone).